The sequence spans 413 residues: High zinc activated nuclear receptor protein (413 aa).

The nuclear receptor DNA-binding region spans 11–86; that stretch reads LGNCKICLQR…EGMKIELVQL (76 aa). 2 consecutive NR C4-type zinc fingers follow at residues 14-34 and 50-69; these read CKIC…CRAC and CKEK…CRSC. The required for zinc-binding stretch occupies residues 101-412; the sequence is SIDPLFTPNV…TSQCIVHTKN (312 aa). Residues 135–396 form the NR LBD domain; that stretch reads QMTSGYAMFL…VCCKNFKEDA (262 aa).

Belongs to the nuclear hormone receptor family. Weakly expressed in intestinal cells in the absence of zinc supplementation. Upon zinc supplementation, accumulates in alimentary tract cells, and it is mainly expressed in the intestine.

The protein resides in the nucleus. It localises to the cytoplasm. Functionally, nuclear receptor transcription factor that binds to DNA enhancer elements to promote the transcription of genes required to maintain micronutrient homeostasis. Direct binding to its ligand zinc allows for nuclear accumulation and activation, which thereby induces the transcription of genes required to promote the storage and detoxification of excess dietary zinc. This in turn, allows for internal zinc levels to be detected and regulated. The chain is High zinc activated nuclear receptor protein from Caenorhabditis elegans.